Consider the following 221-residue polypeptide: Oxaloacetate tautomerase oaa1, mitochondrial (221 aa).

Positions 59, 61, and 93 each coordinate Mg(2+).

It belongs to the FAH family. The cofactor is Mg(2+). Mn(2+) is required as a cofactor.

It localises to the mitochondrion. The protein localises to the cytoplasm. It catalyses the reaction oxaloacetate = enol-oxaloacetate. In terms of biological role, tautomerase that converts enol-oxaloacetate, a strong inhibitor of succinate dehydrogenase, to the physiological keto form of oxaloacetate. The protein is Oxaloacetate tautomerase oaa1, mitochondrial of Schizosaccharomyces pombe (strain 972 / ATCC 24843) (Fission yeast).